The chain runs to 503 residues: uncharacterized protein (503 aa).

The protein belongs to the Mg-chelatase subunits D/I family. ComM subfamily.

This is an uncharacterized protein from Mycobacterium tuberculosis (strain CDC 1551 / Oshkosh).